The primary structure comprises 214 residues: MKNRLVIIVFMVVTMLCASLALPLEEKEDEKDEKRSLEVAGAVMEGANLGMSVLQTILQAIGDVSRKIAVGVDNESGRSWTAQNAYFRSGTSDVILPHTVPSGKALLYDGQKNRGPVATGVVGVITYTMGDGNTLAVMFSVPYDYNWYSNWWNVKIYHGKVRASQKMYEDLYYYRSPFKGDNGWHERNLGYGLKSKGFMNSSGAALLQIKVMKA.

The N-terminal stretch at 1–21 (MKNRLVIIVFMVVTMLCASLA) is a signal peptide. Positions 22 to 35 (LPLEEKEDEKDEKR) are excised as a propeptide. Positions 38-47 (EVAGAVMEGA) are plays an important role in the hemolytic activity. The tract at residues 46 to 65 (GANLGMSVLQTILQAIGDVS) is N-terminal region. Residues Ser-89, Val-122, Ser-140, Pro-142, Tyr-168, Tyr-172, and Tyr-173 each coordinate phosphocholine. The tract at residues 140–155 (SVPYDYNWYSNWWNVK) is trp-rich region, which is important for the binding to lipid membrane. Residues 179-181 (KGD) carry the Cell attachment site, crucial for protein stability motif.

The protein belongs to the actinoporin family. Sea anemone subfamily. Octamer or nonamer in membranes. Monomer in the soluble state.

Its subcellular location is the secreted. It is found in the nematocyst. It localises to the target cell membrane. Functionally, pore-forming protein that forms cation-selective hydrophilic pores in cell membranes and causes cytolysis. Pore formation is a multi-step process that involves specific recognition of membrane sphingomyelin (but neither cholesterol nor phosphatidylcholine) using aromatic rich region and adjacent phosphocholine (POC) binding site, firm binding to the membrane (mainly driven by hydrophobic interactions) accompanied by the transfer of the N-terminal region to the lipid-water interface and finally pore formation after oligomerization of monomers. This protein shows potent hemolytic activity (EC(50)=0.09 nM), as well as potent cytotoxic activity on nucleated cells (L1210 cells). The cytotoxic process starts with cellular swelling that is time and dose dependent and occurs up to a critical volume, probably due to influx of water via pores opened by this actinoporin. The second phase consists of the final loss of membrane integrity that leads to cytolysis. The sequence is that of Nigrelysin from Anthopleura nigrescens (Sea anemone).